Here is a 306-residue protein sequence, read N- to C-terminus: UDP-N-acetylenolpyruvoylglucosamine reductase (306 aa).

Residues 28-193 (KVGGPADFLA…VSAKFSLKPG (166 aa)) enclose the FAD-binding PCMH-type domain. Arg172 is an active-site residue. Ser222 acts as the Proton donor in catalysis. Glu292 is an active-site residue.

This sequence belongs to the MurB family. The cofactor is FAD.

The protein localises to the cytoplasm. It catalyses the reaction UDP-N-acetyl-alpha-D-muramate + NADP(+) = UDP-N-acetyl-3-O-(1-carboxyvinyl)-alpha-D-glucosamine + NADPH + H(+). Its pathway is cell wall biogenesis; peptidoglycan biosynthesis. Cell wall formation. The chain is UDP-N-acetylenolpyruvoylglucosamine reductase from Streptococcus mutans serotype c (strain ATCC 700610 / UA159).